The following is a 587-amino-acid chain: Thiol:disulfide interchange protein DsbD 2 (587 aa).

Positions 1–18 (MRVLILLLMLLLPGLSQA) are cleaved as a signal peptide. Residues 19 to 172 (QPGDDLFAPR…SLQAGNLAWS (154 aa)) are Periplasmic-facing. 2 disulfides stabilise this stretch: cysteine 124-cysteine 130 and cysteine 188-cysteine 308. Residues 173–193 (LLLFFGLGLLLAFAPCSLPML) traverse the membrane as a helical segment. Residues 194-216 (PILAGLVVGSGAGPRRGLLLAGS) are Cytoplasmic-facing. A helical transmembrane segment spans residues 217-237 (YVLSMALVYAGLGVVAALLGG). Over 238–246 (NLQAWLQQP) the chain is Periplasmic. The helical transmembrane segment at 247 to 267 (WLLGSFAALFVFLALPMFGFF) threads the bilayer. Residues 268–299 (ELQLPAALRDRLDGLSRGRKGGSLAGAAALGA) lie on the Cytoplasmic side of the membrane. The chain crosses the membrane as a helical span at residues 300 to 320 (LSGLLVGPCMTAPLAGALLYI). Residues 321-330 (AQTGNALHGG) lie on the Periplasmic side of the membrane. The chain crosses the membrane as a helical span at residues 331–351 (LVLFSLGLGIGMPLLLLVTVG). The Cytoplasmic portion of the chain corresponds to 352–360 (SRFLPKPGP). The helical transmembrane segment at 361–381 (WMNLVKGVFGFLFLGTAWILL) threads the bilayer. Topologically, residues 382 to 383 (RP) are periplasmic. The helical transmembrane segment at 384 to 404 (LLGEALWIGLGGALLLVLAYA) threads the bilayer. The Cytoplasmic portion of the chain corresponds to 405 to 416 (ALHTARGLARHA). The chain crosses the membrane as a helical span at residues 417–437 (VLFGAAGCIFGLWGAAMLLGA). The Periplasmic segment spans residues 438-587 (AAGADDPWRP…AHWQATRERG (150 aa)). Residues 448–585 (LQVYAAANRG…FLAHWQATRE (138 aa)) form the Thioredoxin domain. A disulfide bridge connects residues cysteine 500 and cysteine 503.

This sequence belongs to the thioredoxin family. DsbD subfamily.

The protein localises to the cell inner membrane. It carries out the reaction [protein]-dithiol + NAD(+) = [protein]-disulfide + NADH + H(+). The catalysed reaction is [protein]-dithiol + NADP(+) = [protein]-disulfide + NADPH + H(+). Functionally, required to facilitate the formation of correct disulfide bonds in some periplasmic proteins and for the assembly of the periplasmic c-type cytochromes. Acts by transferring electrons from cytoplasmic thioredoxin to the periplasm. This transfer involves a cascade of disulfide bond formation and reduction steps. The protein is Thiol:disulfide interchange protein DsbD 2 of Pseudomonas aeruginosa (strain ATCC 15692 / DSM 22644 / CIP 104116 / JCM 14847 / LMG 12228 / 1C / PRS 101 / PAO1).